The sequence spans 472 residues: Argininosuccinate lyase (472 aa).

It belongs to the lyase 1 family. Argininosuccinate lyase subfamily.

It is found in the cytoplasm. It carries out the reaction 2-(N(omega)-L-arginino)succinate = fumarate + L-arginine. It participates in amino-acid biosynthesis; L-arginine biosynthesis; L-arginine from L-ornithine and carbamoyl phosphate: step 3/3. In Polynucleobacter asymbioticus (strain DSM 18221 / CIP 109841 / QLW-P1DMWA-1) (Polynucleobacter necessarius subsp. asymbioticus), this protein is Argininosuccinate lyase.